The sequence spans 221 residues: UPF0758 protein CGSHiEE_07200 (221 aa).

The MPN domain occupies isoleucine 99–leucine 221. Residues histidine 170, histidine 172, and aspartate 183 each coordinate Zn(2+). The short motif at histidine 170 to aspartate 183 is the JAMM motif element.

Belongs to the UPF0758 family.

In Haemophilus influenzae (strain PittEE), this protein is UPF0758 protein CGSHiEE_07200.